A 330-amino-acid polypeptide reads, in one-letter code: MKKIAVDAMGGDYAPQAIVEGVNQALSDFSDIEVQLYGDEAKIKQYLTATERVSIIHTDEKIDSDDEPTRAIRNKKNASMVLAAKAVKDGEADAVLSAGNTGALLAAGFFIVGRIKNIDRPGLMSTLPTVDGKGFDMLDLGANAENTAQHLHQYAVLGSFYAKNVRGIAQPRVGLLNNGTESSKGDPLRKETYELLAADESLNFIGNVEARDLMNGVADVVVADGFTGNAVLKSIEGTAMGIMGLLKTAITGGGLRAKLGALLLKDSLRGLKKQLNYSDVGGAVLFGVKAPVVKTHGSSDAKAVYSTIRQIRTMLETDVVAQTAREFSGE.

This sequence belongs to the PlsX family. As to quaternary structure, homodimer. Probably interacts with PlsY.

It is found in the cytoplasm. The enzyme catalyses a fatty acyl-[ACP] + phosphate = an acyl phosphate + holo-[ACP]. It functions in the pathway lipid metabolism; phospholipid metabolism. Catalyzes the reversible formation of acyl-phosphate (acyl-PO(4)) from acyl-[acyl-carrier-protein] (acyl-ACP). This enzyme utilizes acyl-ACP as fatty acyl donor, but not acyl-CoA. This Streptococcus pneumoniae serotype 2 (strain D39 / NCTC 7466) protein is Phosphate acyltransferase.